The sequence spans 349 residues: Anthranilate phosphoribosyltransferase (349 aa).

5-phospho-alpha-D-ribose 1-diphosphate-binding positions include Gly82, 85-86 (GD), 92-95 (NVST), 110-118 (KHGNRAVSG), and Ser122. Gly82 contributes to the anthranilate binding site. Ser94 contributes to the Mg(2+) binding site. Asn113 is an anthranilate binding site. An anthranilate-binding site is contributed by Arg168. 2 residues coordinate Mg(2+): Asp227 and Glu228.

This sequence belongs to the anthranilate phosphoribosyltransferase family. In terms of assembly, homodimer. It depends on Mg(2+) as a cofactor.

It catalyses the reaction N-(5-phospho-beta-D-ribosyl)anthranilate + diphosphate = 5-phospho-alpha-D-ribose 1-diphosphate + anthranilate. The protein operates within amino-acid biosynthesis; L-tryptophan biosynthesis; L-tryptophan from chorismate: step 2/5. Its function is as follows. Catalyzes the transfer of the phosphoribosyl group of 5-phosphorylribose-1-pyrophosphate (PRPP) to anthranilate to yield N-(5'-phosphoribosyl)-anthranilate (PRA). The chain is Anthranilate phosphoribosyltransferase from Pseudomonas savastanoi pv. phaseolicola (strain 1448A / Race 6) (Pseudomonas syringae pv. phaseolicola (strain 1448A / Race 6)).